We begin with the raw amino-acid sequence, 284 residues long: MDAIKKKMQAMKLEKDDAMDRADTLEQQNKEANIRAEKAEEEVHNLQKRMQQLENDLDQVQESLLKANTQLEEKDKALSNAEGEVAALNRRIQLLEEDLERSEERLNTATTKLAEASQAADESERMRKVLENRSLSDEERMDALENQLKEARFLAEEADRKYDEVARKLAMVEADLERAEERAETGESKIVELEEELRVVGNNLKSLEVSEEKANQREEAYKEQIKTLTNKLKAAEARAEFAERSVQKLQKEVDRLEDELVNEKEKYKSTTDELDQAFSELSGY.

Residue Met-1 is modified to N-acetylmethionine. The disordered stretch occupies residues 1–21; sequence MDAIKKKMQAMKLEKDDAMDR. The stretch at 1-280 forms a coiled coil; it reads MDAIKKKMQA…TDELDQAFSE (280 aa). Positions 12 to 21 are enriched in basic and acidic residues; sequence KLEKDDAMDR.

The protein belongs to the tropomyosin family. Homodimer. As to expression, expressed in muscle (at protein level). Expressed in pincer muscles.

In terms of biological role, tropomyosin, in association with the troponin complex, plays a central role in the calcium dependent regulation of muscle contraction. This chain is Tropomyosin Por p 1.0101, found in Portunus pelagicus (Blue swimmer crab).